Consider the following 341-residue polypeptide: Aspartate carbamoyltransferase catalytic subunit (341 aa).

Carbamoyl phosphate contacts are provided by Arg89 and Thr90. Lys117 is an L-aspartate binding site. Arg139, His169, and Gln172 together coordinate carbamoyl phosphate. The L-aspartate site is built by Arg202 and Arg257. Gly298 and Pro299 together coordinate carbamoyl phosphate.

Belongs to the aspartate/ornithine carbamoyltransferase superfamily. ATCase family. As to quaternary structure, heterododecamer (2C3:3R2) of six catalytic PyrB chains organized as two trimers (C3), and six regulatory PyrI chains organized as three dimers (R2).

It catalyses the reaction carbamoyl phosphate + L-aspartate = N-carbamoyl-L-aspartate + phosphate + H(+). It functions in the pathway pyrimidine metabolism; UMP biosynthesis via de novo pathway; (S)-dihydroorotate from bicarbonate: step 2/3. In terms of biological role, catalyzes the condensation of carbamoyl phosphate and aspartate to form carbamoyl aspartate and inorganic phosphate, the committed step in the de novo pyrimidine nucleotide biosynthesis pathway. The sequence is that of Aspartate carbamoyltransferase catalytic subunit from Paraburkholderia phytofirmans (strain DSM 17436 / LMG 22146 / PsJN) (Burkholderia phytofirmans).